Here is a 119-residue protein sequence, read N- to C-terminus: UPF0231 protein ECA3777 (119 aa).

The protein belongs to the UPF0231 family.

The chain is UPF0231 protein ECA3777 from Pectobacterium atrosepticum (strain SCRI 1043 / ATCC BAA-672) (Erwinia carotovora subsp. atroseptica).